The following is a 331-amino-acid chain: Biotin synthase (331 aa).

In terms of domain architecture, Radical SAM core spans 53 to 272 (NHVETASLLS…LATARVMMPR (220 aa)). Residues Cys-68, Cys-72, and Cys-75 each coordinate [4Fe-4S] cluster. Residues Cys-112, Cys-143, Cys-203, and Arg-276 each coordinate [2Fe-2S] cluster.

It belongs to the radical SAM superfamily. Biotin synthase family. In terms of assembly, homodimer. The cofactor is [4Fe-4S] cluster. [2Fe-2S] cluster serves as cofactor.

The enzyme catalyses (4R,5S)-dethiobiotin + (sulfur carrier)-SH + 2 reduced [2Fe-2S]-[ferredoxin] + 2 S-adenosyl-L-methionine = (sulfur carrier)-H + biotin + 2 5'-deoxyadenosine + 2 L-methionine + 2 oxidized [2Fe-2S]-[ferredoxin]. The protein operates within cofactor biosynthesis; biotin biosynthesis; biotin from 7,8-diaminononanoate: step 2/2. Its function is as follows. Catalyzes the conversion of dethiobiotin (DTB) to biotin by the insertion of a sulfur atom into dethiobiotin via a radical-based mechanism. The protein is Biotin synthase of Bradyrhizobium diazoefficiens (strain JCM 10833 / BCRC 13528 / IAM 13628 / NBRC 14792 / USDA 110).